The sequence spans 180 residues: tRNA (cytidine(56)-2'-O)-methyltransferase (180 aa).

Residues Leu85, 114–118 (GAEKV), and 132–139 (VGNQPHSE) contribute to the S-adenosyl-L-methionine site.

The protein belongs to the aTrm56 family. Homodimer.

The protein localises to the cytoplasm. The catalysed reaction is cytidine(56) in tRNA + S-adenosyl-L-methionine = 2'-O-methylcytidine(56) in tRNA + S-adenosyl-L-homocysteine + H(+). Its function is as follows. Specifically catalyzes the AdoMet-dependent 2'-O-ribose methylation of cytidine at position 56 in tRNAs. The protein is tRNA (cytidine(56)-2'-O)-methyltransferase of Thermococcus kodakarensis (strain ATCC BAA-918 / JCM 12380 / KOD1) (Pyrococcus kodakaraensis (strain KOD1)).